Consider the following 75-residue polypeptide: Cruzioseptin-6 (75 aa).

The first 22 residues, 1–22, serve as a signal peptide directing secretion; it reads MAYLKKSLFLVLFLGLVSLSIC. A propeptide spanning residues 23 to 43 is cleaved from the precursor; the sequence is EEEKREEENEEEQEDDDQSEE. A disordered region spans residues 24–44; that stretch reads EEKREEENEEEQEDDDQSEEK. Residues 30 to 41 are compositionally biased toward acidic residues; sequence ENEEEQEDDDQS.

As to expression, expressed by the skin glands.

Its subcellular location is the secreted. Has antimicrobial activity. This Cruziohyla calcarifer (Splendid leaf frog) protein is Cruzioseptin-6.